Reading from the N-terminus, the 452-residue chain is 23S rRNA (uracil(1939)-C(5))-methyltransferase RlmD (452 aa).

The TRAM domain occupies methionine 1–alanine 57. The [4Fe-4S] cluster site is built by cysteine 70, cysteine 76, cysteine 79, and cysteine 157. S-adenosyl-L-methionine-binding residues include glutamine 269, phenylalanine 298, asparagine 303, glutamate 319, asparagine 347, and aspartate 368. Residue cysteine 395 is the Nucleophile of the active site.

The protein belongs to the class I-like SAM-binding methyltransferase superfamily. RNA M5U methyltransferase family. RlmD subfamily.

The enzyme catalyses uridine(1939) in 23S rRNA + S-adenosyl-L-methionine = 5-methyluridine(1939) in 23S rRNA + S-adenosyl-L-homocysteine + H(+). In terms of biological role, catalyzes the formation of 5-methyl-uridine at position 1939 (m5U1939) in 23S rRNA. The sequence is that of 23S rRNA (uracil(1939)-C(5))-methyltransferase RlmD from Neisseria lactamica (strain 020-06).